A 467-amino-acid polypeptide reads, in one-letter code: Glutamate--tRNA ligase (467 aa).

The 'HIGH' region signature appears at 9–19; sequence PSPTGYLHIGG. A 'KMSKS' region motif is present at residues 237-241; the sequence is KLSKR. An ATP-binding site is contributed by lysine 240.

It belongs to the class-I aminoacyl-tRNA synthetase family. Glutamate--tRNA ligase type 1 subfamily. Monomer.

It localises to the cytoplasm. It carries out the reaction tRNA(Glu) + L-glutamate + ATP = L-glutamyl-tRNA(Glu) + AMP + diphosphate. In terms of biological role, catalyzes the attachment of glutamate to tRNA(Glu) in a two-step reaction: glutamate is first activated by ATP to form Glu-AMP and then transferred to the acceptor end of tRNA(Glu). This is Glutamate--tRNA ligase from Xanthomonas campestris pv. campestris (strain 8004).